The sequence spans 136 residues: MLMPKRVKYRKPFSAPRIKGVAKRGATVSFGEYGLKALEPKWVTARQIEAARIVISRYAKKKGKMWTRVFPDKAITKHPAETRMGKGKGAPDHWVAVVKPGHILFEVEGLDLDTTKRAMRMASDKLPIKTKLVSRR.

This sequence belongs to the universal ribosomal protein uL16 family. Part of the 50S ribosomal subunit.

Binds 23S rRNA and is also seen to make contacts with the A and possibly P site tRNAs. In Elusimicrobium minutum (strain Pei191), this protein is Large ribosomal subunit protein uL16.